The primary structure comprises 94 residues: Prepro-gonadotropin-releasing hormone-like protein (94 aa).

The first 21 residues, 1 to 21 (MNACILLTTLVTMITIEKVQG), serve as a signal peptide directing secretion.

Its subcellular location is the secreted. Its function is as follows. Neuropeptide involved in reproduction. May be an important hormone in the regulation of gonadal maturation. This Ruditapes philippinarum (Japanese carpet shell) protein is Prepro-gonadotropin-releasing hormone-like protein.